A 268-amino-acid polypeptide reads, in one-letter code: 3-methyl-2-oxobutanoate hydroxymethyltransferase (268 aa).

Residues aspartate 41 and aspartate 80 each coordinate Mg(2+). 3-methyl-2-oxobutanoate contacts are provided by residues 41 to 42 (DS), aspartate 80, and lysine 110. Glutamate 112 lines the Mg(2+) pocket. Glutamate 178 functions as the Proton acceptor in the catalytic mechanism.

The protein belongs to the PanB family. In terms of assembly, homodecamer; pentamer of dimers. The cofactor is Mg(2+).

Its subcellular location is the cytoplasm. It carries out the reaction 3-methyl-2-oxobutanoate + (6R)-5,10-methylene-5,6,7,8-tetrahydrofolate + H2O = 2-dehydropantoate + (6S)-5,6,7,8-tetrahydrofolate. The protein operates within cofactor biosynthesis; coenzyme A biosynthesis. Its function is as follows. Catalyzes the reversible reaction in which hydroxymethyl group from 5,10-methylenetetrahydrofolate is transferred onto alpha-ketoisovalerate to form ketopantoate. In Natronomonas pharaonis (strain ATCC 35678 / DSM 2160 / CIP 103997 / JCM 8858 / NBRC 14720 / NCIMB 2260 / Gabara) (Halobacterium pharaonis), this protein is 3-methyl-2-oxobutanoate hydroxymethyltransferase.